Here is a 75-residue protein sequence, read N- to C-terminus: Small ribosomal subunit protein bS18 (75 aa).

The protein belongs to the bacterial ribosomal protein bS18 family. As to quaternary structure, part of the 30S ribosomal subunit. Forms a tight heterodimer with protein bS6.

Functionally, binds as a heterodimer with protein bS6 to the central domain of the 16S rRNA, where it helps stabilize the platform of the 30S subunit. This is Small ribosomal subunit protein bS18 from Pseudoalteromonas translucida (strain TAC 125).